A 748-amino-acid polypeptide reads, in one-letter code: Cytosolic phospholipase A2 (748 aa).

Residues 1 to 178 (MSFIDPYQHI…MRKLLGPKKS (178 aa)) are phospholipid binding. The residue at position 2 (S2) is a Phosphoserine. The C2 domain occupies 6 to 122 (PYQHIIVEHQ…KVGEKKEVPF (117 aa)). The Ca(2+) site is built by D40, T41, D43, N65, D93, A94, and N95. The region spanning 138–739 (VCSSPDLRFS…SNVEARRFFN (602 aa)) is the PLA2c domain. The Nucleophile role is filled by S228. T268 carries the phosphothreonine modification. A disordered region spans residues 428-458 (HIVSNDSSDSDDESQEPKGTEGEDAEREYQN). Phosphoserine occurs at positions 434, 435, and 437. Residues 442–458 (QEPKGTEGEDAEREYQN) show a composition bias toward basic and acidic residues. S505 carries the post-translational modification Phosphoserine; by MAPK. S514 carries the post-translational modification Phosphoserine. A Glycyl lysine isopeptide (Lys-Gly) (interchain with G-Cter in SUMO2) cross-link involves residue K540. D548 serves as the catalytic Proton acceptor. K605 is covalently cross-linked (Glycyl lysine isopeptide (Lys-Gly) (interchain with G-Cter in SUMO2)). Residues S726 and S728 each carry the phosphoserine modification.

As to quaternary structure, interacts with KAT5. Post-translationally, phosphorylated at both Ser-505 and Ser-726 in response to mitogenic stimuli.

It localises to the cytoplasm. It is found in the golgi apparatus membrane. The protein resides in the nucleus envelope. The enzyme catalyses a 1,2-diacyl-sn-glycero-3-phosphocholine + H2O = a 1-acyl-sn-glycero-3-phosphocholine + a fatty acid + H(+). It catalyses the reaction a 1-O-alkyl-2-acyl-sn-glycero-3-phosphocholine + H2O = a 1-O-alkyl-sn-glycero-3-phosphocholine + a fatty acid + H(+). It carries out the reaction a 1-acyl-sn-glycero-3-phosphocholine + H2O = sn-glycerol 3-phosphocholine + a fatty acid + H(+). The catalysed reaction is 1-hexadecanoyl-2-(5Z,8Z,11Z,14Z-eicosatetraenoyl)-sn-glycero-3-phosphocholine + H2O = 1-hexadecanoyl-sn-glycero-3-phosphocholine + (5Z,8Z,11Z,14Z)-eicosatetraenoate + H(+). The enzyme catalyses 1,2-di-(5Z,8Z,11Z,14Z-eicosatetraenoyl)-sn-glycero-3-phosphocholine + H2O = 1-(5Z,8Z,11Z,14Z-eicosatetraenoyl)-sn-glycero-3-phosphocholine + (5Z,8Z,11Z,14Z)-eicosatetraenoate + H(+). It catalyses the reaction 1-octadecanoyl-2-(5Z,8Z,11Z,14Z-eicosatetraenoyl)-sn-glycero-3-phosphocholine + H2O = 1-octadecanoyl-sn-glycero-3-phosphocholine + (5Z,8Z,11Z,14Z)-eicosatetraenoate + H(+). It carries out the reaction 1-hexadecanoyl-2-(9Z,12Z-octadecadienoyl)-sn-glycero-3-phosphocholine + H2O = (9Z,12Z)-octadecadienoate + 1-hexadecanoyl-sn-glycero-3-phosphocholine + H(+). The catalysed reaction is 1-octadecanoyl-2-(9Z,12Z,15Z-octadecatrienoyl)-sn-glycero-3-phosphocholine + H2O = (9Z,12Z,15Z)-octadecatrienoate + 1-octadecanoyl-sn-glycero-3-phosphocholine + H(+). The enzyme catalyses 1-(5Z,8Z,11Z,14Z-eicosatetraenoyl)-2-hexadecanoyl-sn-glycero-3-phosphocholine + H2O = 1-(5Z,8Z,11Z,14Z-eicosatetraenoyl)-sn-glycero-3-phosphocholine + hexadecanoate + H(+). It catalyses the reaction 1-O-hexadecyl-2-(5Z,8Z,11Z,14Z)-eicosatetraenoyl-sn-glycero-3-phosphocholine + H2O = 1-O-hexadecyl-sn-glycero-3-phosphocholine + (5Z,8Z,11Z,14Z)-eicosatetraenoate + H(+). It carries out the reaction 1,2-di-(9Z-octadecenoyl)-sn-glycero-3-phospho-(1'-sn-glycerol) + H2O = 1-(9Z-octadecenoyl)-sn-glycero-3-phospho-(1'-sn-glycerol) + (9Z)-octadecenoate + H(+). The catalysed reaction is 1-octadecanoyl-2-(5Z,8Z,11Z,14Z-eicosatetraenoyl)-sn-glycero-3-phosphate + H2O = 1-octadecanoyl-sn-glycero-3-phosphate + (5Z,8Z,11Z,14Z)-eicosatetraenoate + H(+). The enzyme catalyses 1-hexadecanoyl-sn-glycero-3-phosphocholine + H2O = sn-glycerol 3-phosphocholine + hexadecanoate + H(+). It catalyses the reaction 2-(prostaglandin E2)-sn-glycero-3-phosphoethanolamine + H2O = sn-glycero-3-phosphoethanolamine + prostaglandin E2 + H(+). It carries out the reaction 2-[(15S)-hydroxy-(5Z,8Z,11Z,13E)-eicosatetraenoyl]-sn-glycero-3-phosphocholine + H2O = (15S)-hydroxy-(5Z,8Z,11Z,13E)-eicosatetraenoate + sn-glycerol 3-phosphocholine + H(+). The catalysed reaction is 2-[(15R)-hydroxy-(5Z,8Z,11Z,13E)-eicosatetraenoyl]-sn-glycero-3-phosphocholine + H2O = (15R)-hydroxy-(5Z,8Z,11Z,13E)-eicosatetraenoate + sn-glycerol 3-phosphocholine + H(+). The enzyme catalyses 2-(prostaglandin E2)-sn-glycero-3-phosphocholine + H2O = prostaglandin E2 + sn-glycerol 3-phosphocholine + H(+). It catalyses the reaction 2-[(11R)-hydroxy-(5Z,8Z,12E,14Z)-eicosatetraenoyl]-sn-glycero-3-phosphocholine + H2O = (11R)-hydroxy-(5Z,8Z,12E,14Z)-eicosatetraenoate + sn-glycerol 3-phosphocholine + H(+). It carries out the reaction 1-(5Z,8Z,11Z,14Z-eicosatetraenoyl)-2-O-hexadecyl-sn-glycero-3-phosphocholine + H2O = 2-O-hexadecyl-sn-glycero-3-phosphocholine + (5Z,8Z,11Z,14Z)-eicosatetraenoate + H(+). The catalysed reaction is 1-octadecanoyl-2-(5Z,8Z,11Z,14Z-eicosatetraenoyl)-sn-glycero-3-phosphocholine + glycerol = 1-(5Z,8Z,11Z,14Z-eicosatetraenoyl)-glycerol + 1-octadecanoyl-sn-glycero-3-phosphocholine. The enzyme catalyses 1-octadecanoyl-2-(9Z,12Z,15Z-octadecatrienoyl)-sn-glycero-3-phosphocholine + glycerol = 1-(9Z,12Z,15Z-octadecatrienoyl)-glycerol + 1-octadecanoyl-sn-glycero-3-phosphocholine. Its pathway is membrane lipid metabolism; glycerophospholipid metabolism. It participates in lipid metabolism; arachidonate metabolism. It functions in the pathway lipid metabolism; prostaglandin biosynthesis. The protein operates within lipid metabolism; leukotriene B4 biosynthesis. With respect to regulation, activated by cytosolic calcium, which is necessary for binding to membrane lipids. Activated by phosphorylation in response to mitogenic stimuli. Has primarily calcium-dependent phospholipase and lysophospholipase activities, with a major role in membrane lipid remodeling and biosynthesis of lipid mediators of the inflammatory response. Plays an important role in embryo implantation and parturition through its ability to trigger prostanoid production. Preferentially hydrolyzes the ester bond of the fatty acyl group attached at sn-2 position of phospholipids (phospholipase A2 activity). Selectively hydrolyzes sn-2 arachidonoyl group from membrane phospholipids, providing the precursor for eicosanoid biosynthesis via the cyclooxygenase pathway. In an alternative pathway of eicosanoid biosynthesis, hydrolyzes sn-2 fatty acyl chain of eicosanoid lysophopholipids to release free bioactive eicosanoids. Hydrolyzes the ester bond of the fatty acyl group attached at sn-1 position of phospholipids (phospholipase A1 activity) only if an ether linkage rather than an ester linkage is present at the sn-2 position. This hydrolysis is not stereospecific. Has calcium-independent phospholipase A2 and lysophospholipase activities in the presence of phosphoinositides. Has O-acyltransferase activity. Catalyzes the transfer of fatty acyl chains from phospholipids to a primary hydroxyl group of glycerol (sn-1 or sn-3), potentially contributing to monoacylglycerol synthesis. This is Cytosolic phospholipase A2 (PLA2G4A) from Oryctolagus cuniculus (Rabbit).